Reading from the N-terminus, the 563-residue chain is MVSKTFFLAAALNVVGTLAQAPTAVLNGNEVISGVLEGKVDTFKGIPFADPPVGDLRFKHPQPFTGSYQGLKANDFSSACMQLDPGNAISLLDKVVGLGKIIPDNLRGPLYDMAQGSVSMNEDCLYLNVFRPAGTKPDAKLPVMVWIYGGAFVFGSSASYPGNGYVKESVEMGQPVVFVSINYRTGPYGFLGGDAITAEGNTNAGLHDQRKGLEWVSDNIANFGGDPDKVMIFGESAGAMSVAHQLVAYGGDNTYNGKQLFHSAILQSGGPLPYFDSTSVGPESAYSRFAQYAGCDASAGDNETLACLRSKSSDVLHSAQNSYDLKDLFGLLPQFLGFGPRPDGNIIPDAAYELYRSGRYAKVPYITGNQEDEGTILAPVAINATTTPHVKKWLKYICSEASDASLDRVLSLYPGSWSEGAPFRTGILNALTPQFKRIAAIFTDLLFQSPRRVMLNATKDVNRWTYLATQLHNLVPFLGTFHGSDLLFQYYVDLGPSSAYRRYFISFANHHDPNVGTNLKQWDMYTDSGKEMLQIHMIGNSMRTDDFRIEGISNFESDVTLFG.

The signal sequence occupies residues 1–19 (MVSKTFFLAAALNVVGTLA). Q20 carries the pyrrolidone carboxylic acid modification. The cysteines at positions 80 and 124 are disulfide-linked. S236 functions as the Acyl-ester intermediate in the catalytic mechanism. The cysteines at positions 295 and 307 are disulfide-linked. N302 carries N-linked (GlcNAc...) asparagine glycosylation. The active-site Charge relay system is the E373. N383 is a glycosylation site (N-linked (GlcNAc...) asparagine). The active-site Charge relay system is the H482.

Belongs to the type-B carboxylesterase/lipase family. As to quaternary structure, monomer.

The protein localises to the secreted. It catalyses the reaction a triacylglycerol + H2O = a diacylglycerol + a fatty acid + H(+). Hydrolyzes all ester bonds in triglyceride and displays a high affinity for triolein. For unsaturated substrates having long fatty acyl chains (C18:2 cis-9, cis-12 and C18:3 cis-9, cis-12, cis-15) GCL I shows higher specific activity than GCL II, whereas GCL II shows higher specific activity against saturated substrates having short fatty acid chains (C8, C10, C12 and C14). The polypeptide is Lipase 1 (LIP1) (Geotrichum candidum (Oospora lactis)).